Consider the following 555-residue polypeptide: Membrane protein insertase YidC (555 aa).

Helical transmembrane passes span 7 to 24 (VLWV…DNWQ), 367 to 387 (WGWS…PLSA), 437 to 457 (LPVV…LASV), 476 to 496 (PFFI…SLNP), and 511 to 531 (PIAF…YYVV).

This sequence belongs to the OXA1/ALB3/YidC family. Type 1 subfamily. As to quaternary structure, interacts with the Sec translocase complex via SecD. Specifically interacts with transmembrane segments of nascent integral membrane proteins during membrane integration.

It localises to the cell inner membrane. Required for the insertion and/or proper folding and/or complex formation of integral membrane proteins into the membrane. Involved in integration of membrane proteins that insert both dependently and independently of the Sec translocase complex, as well as at least some lipoproteins. Aids folding of multispanning membrane proteins. The polypeptide is Membrane protein insertase YidC (Burkholderia lata (strain ATCC 17760 / DSM 23089 / LMG 22485 / NCIMB 9086 / R18194 / 383)).